We begin with the raw amino-acid sequence, 485 residues long: Adenosylhomocysteinase (485 aa).

Residues T64, D139, and E205 each coordinate substrate. 206 to 208 (TTT) contributes to the NAD(+) binding site. Residues K235 and D239 each contribute to the substrate site. NAD(+) is bound by residues N240, 269 to 274 (GYGDVG), E292, N327, 348 to 350 (IGH), and N397.

The protein belongs to the adenosylhomocysteinase family. It depends on NAD(+) as a cofactor.

The enzyme catalyses S-adenosyl-L-homocysteine + H2O = L-homocysteine + adenosine. It functions in the pathway amino-acid biosynthesis; L-homocysteine biosynthesis; L-homocysteine from S-adenosyl-L-homocysteine: step 1/1. In terms of biological role, adenosylhomocysteine is a competitive inhibitor of S-adenosyl-L-methionine-dependent methyl transferase reactions; therefore adenosylhomocysteinase may play a key role in the control of methylations via regulation of the intracellular concentration of adenosylhomocysteine. The chain is Adenosylhomocysteinase (SAHH) from Solanum lycopersicum (Tomato).